Here is a 234-residue protein sequence, read N- to C-terminus: 2,3-bisphosphoglycerate-dependent phosphoglycerate mutase (234 aa).

Residues 8 to 15, 21 to 22, Arg60, 87 to 90, Lys98, 114 to 115, and 183 to 184 contribute to the substrate site; these read RHGESVWN, TG, ERHY, RR, and GN. Residue His9 is the Tele-phosphohistidine intermediate of the active site. The Proton donor/acceptor role is filled by Glu87.

The protein belongs to the phosphoglycerate mutase family. BPG-dependent PGAM subfamily. Homodimer.

The enzyme catalyses (2R)-2-phosphoglycerate = (2R)-3-phosphoglycerate. The protein operates within carbohydrate degradation; glycolysis; pyruvate from D-glyceraldehyde 3-phosphate: step 3/5. Functionally, catalyzes the interconversion of 2-phosphoglycerate and 3-phosphoglycerate. This Citrifermentans bemidjiense (strain ATCC BAA-1014 / DSM 16622 / JCM 12645 / Bem) (Geobacter bemidjiensis) protein is 2,3-bisphosphoglycerate-dependent phosphoglycerate mutase.